The primary structure comprises 441 residues: Ribulose bisphosphate carboxylase large chain (441 aa).

Substrate contacts are provided by Asn-89 and Thr-139. Residue Lys-141 is the Proton acceptor of the active site. Residue Lys-143 participates in substrate binding. The Mg(2+) site is built by Lys-167, Asp-169, and Glu-170. At Lys-167 the chain carries N6-carboxylysine. The Proton acceptor role is filled by His-260. Residues Arg-261, His-293, and Ser-345 each coordinate substrate.

The protein belongs to the RuBisCO large chain family. Type I subfamily. As to quaternary structure, heterohexadecamer of 8 large chains and 8 small chains; disulfide-linked. The disulfide link is formed within the large subunit homodimers. Mg(2+) is required as a cofactor. Post-translationally, the disulfide bond which can form in the large chain dimeric partners within the hexadecamer appears to be associated with oxidative stress and protein turnover.

The protein resides in the plastid. Its subcellular location is the chloroplast. The catalysed reaction is 2 (2R)-3-phosphoglycerate + 2 H(+) = D-ribulose 1,5-bisphosphate + CO2 + H2O. It catalyses the reaction D-ribulose 1,5-bisphosphate + O2 = 2-phosphoglycolate + (2R)-3-phosphoglycerate + 2 H(+). Its function is as follows. RuBisCO catalyzes two reactions: the carboxylation of D-ribulose 1,5-bisphosphate, the primary event in carbon dioxide fixation, as well as the oxidative fragmentation of the pentose substrate in the photorespiration process. Both reactions occur simultaneously and in competition at the same active site. The sequence is that of Ribulose bisphosphate carboxylase large chain from Symphoricarpos albus (Common snowberry).